The chain runs to 493 residues: Cytoplasmic tRNA 2-thiolation protein 2 (493 aa).

S489 bears the Phosphoserine mark.

The protein belongs to the CTU2/NCS2 family. Interacts with NCS6 and URM1. May act by forming a heterodimer with NCS6.

The protein localises to the cytoplasm. It participates in tRNA modification; 5-methoxycarbonylmethyl-2-thiouridine-tRNA biosynthesis. Plays a central role in 2-thiolation of mcm(5)S(2)U at tRNA wobble positions of tRNA(Lys), tRNA(Glu) and tRNA(Gln). May act by forming a heterodimer with NCS6 that ligates sulfur from thiocarboxylated URM1 onto the uridine of tRNAs at wobble position. Prior mcm(5) tRNA modification by the elongator complex is required for 2-thiolation. May also be involved in protein urmylation. The chain is Cytoplasmic tRNA 2-thiolation protein 2 from Saccharomyces cerevisiae (strain YJM789) (Baker's yeast).